A 304-amino-acid polypeptide reads, in one-letter code: tRNA dimethylallyltransferase (304 aa).

10–17 (GPTASGKT) lines the ATP pocket. Residue 12–17 (TASGKT) participates in substrate binding. Interaction with substrate tRNA stretches follow at residues 35 to 38 (DSAL), 159 to 163 (QRLSR), and 240 to 245 (RCVGYR).

The protein belongs to the IPP transferase family. As to quaternary structure, monomer. It depends on Mg(2+) as a cofactor.

It catalyses the reaction adenosine(37) in tRNA + dimethylallyl diphosphate = N(6)-dimethylallyladenosine(37) in tRNA + diphosphate. Functionally, catalyzes the transfer of a dimethylallyl group onto the adenine at position 37 in tRNAs that read codons beginning with uridine, leading to the formation of N6-(dimethylallyl)adenosine (i(6)A). The sequence is that of tRNA dimethylallyltransferase from Shewanella putrefaciens (strain CN-32 / ATCC BAA-453).